The primary structure comprises 277 residues: Alpha carbonic anhydrase 3 (277 aa).

A signal peptide spans 1–19 (MKTIILFVTFLALSSSSLA). An Alpha-carbonic anhydrase domain is found at 24-259 (TEFHYKPGEI…LNGRLVYLNE (236 aa)). Cysteines 49 and 209 form a disulfide. N-linked (GlcNAc...) asparagine glycosylation is found at Asn70 and Asn107. Zn(2+) is bound by residues His117, His119, and His136. Substrate is bound at residue 205 to 206 (TT). Positions 257–277 (LNEQSSPSPTPRLRIPRVGPV) are disordered.

It belongs to the alpha-class carbonic anhydrase family. It depends on Zn(2+) as a cofactor. Post-translationally, N-glycosylated. Expressed in flowers and siliques.

The protein localises to the plastid. The protein resides in the chloroplast stroma. The catalysed reaction is hydrogencarbonate + H(+) = CO2 + H2O. Reversible hydration of carbon dioxide. The chain is Alpha carbonic anhydrase 3 (ACA3) from Arabidopsis thaliana (Mouse-ear cress).